We begin with the raw amino-acid sequence, 334 residues long: MIEADRLIAPENPAFRDEDVIDRAIRPKKLADYQGQDHVRDQMEIFIKAAQLRSEALDHLLIFGPPGLGKTTLANIVANEMEVNIRTTSGPVLEKAGDLAALLTNLEENDVLFIDEIHRLSPMVEEVLYPAMEDYQLDIMIGEGPAARSIKIDLPPFTLIGATTRAGSLTSPLRDRFGITQRLEYYKVQDLQNIVQRSADCLGLSMEPEGALEVARRARGTPRIANRLLRRVRDYAEVKGNGHICADVADKALNMLDVDAQGFDYMDRKLLLAIMEKFGGGPVGLDNMAAAIGEEKDTIEDVLEPYLIQQGYLQRTPRGRIATDRAYLHFGIEK.

Positions 4 to 186 (ADRLIAPENP…FGITQRLEYY (183 aa)) are large ATPase domain (RuvB-L). ATP-binding positions include Ile-25, Arg-26, Gly-67, Lys-70, Thr-71, Thr-72, 133-135 (EDY), Arg-176, Tyr-186, and Arg-223. Thr-71 contributes to the Mg(2+) binding site. A small ATPAse domain (RuvB-S) region spans residues 187-257 (KVQDLQNIVQ…VADKALNMLD (71 aa)). The head domain (RuvB-H) stretch occupies residues 260-334 (AQGFDYMDRK…RAYLHFGIEK (75 aa)). Residues Arg-315 and Arg-320 each contribute to the DNA site.

The protein belongs to the RuvB family. As to quaternary structure, homohexamer. Forms an RuvA(8)-RuvB(12)-Holliday junction (HJ) complex. HJ DNA is sandwiched between 2 RuvA tetramers; dsDNA enters through RuvA and exits via RuvB. An RuvB hexamer assembles on each DNA strand where it exits the tetramer. Each RuvB hexamer is contacted by two RuvA subunits (via domain III) on 2 adjacent RuvB subunits; this complex drives branch migration. In the full resolvosome a probable DNA-RuvA(4)-RuvB(12)-RuvC(2) complex forms which resolves the HJ.

Its subcellular location is the cytoplasm. It catalyses the reaction ATP + H2O = ADP + phosphate + H(+). The RuvA-RuvB-RuvC complex processes Holliday junction (HJ) DNA during genetic recombination and DNA repair, while the RuvA-RuvB complex plays an important role in the rescue of blocked DNA replication forks via replication fork reversal (RFR). RuvA specifically binds to HJ cruciform DNA, conferring on it an open structure. The RuvB hexamer acts as an ATP-dependent pump, pulling dsDNA into and through the RuvAB complex. RuvB forms 2 homohexamers on either side of HJ DNA bound by 1 or 2 RuvA tetramers; 4 subunits per hexamer contact DNA at a time. Coordinated motions by a converter formed by DNA-disengaged RuvB subunits stimulates ATP hydrolysis and nucleotide exchange. Immobilization of the converter enables RuvB to convert the ATP-contained energy into a lever motion, pulling 2 nucleotides of DNA out of the RuvA tetramer per ATP hydrolyzed, thus driving DNA branch migration. The RuvB motors rotate together with the DNA substrate, which together with the progressing nucleotide cycle form the mechanistic basis for DNA recombination by continuous HJ branch migration. Branch migration allows RuvC to scan DNA until it finds its consensus sequence, where it cleaves and resolves cruciform DNA. This Vibrio parahaemolyticus serotype O3:K6 (strain RIMD 2210633) protein is Holliday junction branch migration complex subunit RuvB.